The following is a 157-amino-acid chain: SsrA-binding protein (157 aa).

It belongs to the SmpB family.

Its subcellular location is the cytoplasm. Its function is as follows. Required for rescue of stalled ribosomes mediated by trans-translation. Binds to transfer-messenger RNA (tmRNA), required for stable association of tmRNA with ribosomes. tmRNA and SmpB together mimic tRNA shape, replacing the anticodon stem-loop with SmpB. tmRNA is encoded by the ssrA gene; the 2 termini fold to resemble tRNA(Ala) and it encodes a 'tag peptide', a short internal open reading frame. During trans-translation Ala-aminoacylated tmRNA acts like a tRNA, entering the A-site of stalled ribosomes, displacing the stalled mRNA. The ribosome then switches to translate the ORF on the tmRNA; the nascent peptide is terminated with the 'tag peptide' encoded by the tmRNA and targeted for degradation. The ribosome is freed to recommence translation, which seems to be the essential function of trans-translation. The polypeptide is SsrA-binding protein (Chlorobium chlorochromatii (strain CaD3)).